Consider the following 307-residue polypeptide: Acetyl-coenzyme A carboxylase carboxyl transferase subunit beta (307 aa).

Residues 25–294 enclose the CoA carboxyltransferase N-terminal domain; it reads VWTKCTSCEQ…PLVVPIEQPK (270 aa). Positions 29, 32, 48, and 51 each coordinate Zn(2+). The C4-type zinc-finger motif lies at 29-51; the sequence is CTSCEQVLYHADLERNLEVCPKC.

Belongs to the AccD/PCCB family. Acetyl-CoA carboxylase is a heterohexamer composed of biotin carboxyl carrier protein (AccB), biotin carboxylase (AccC) and two subunits each of ACCase subunit alpha (AccA) and ACCase subunit beta (AccD). Zn(2+) is required as a cofactor.

Its subcellular location is the cytoplasm. It catalyses the reaction N(6)-carboxybiotinyl-L-lysyl-[protein] + acetyl-CoA = N(6)-biotinyl-L-lysyl-[protein] + malonyl-CoA. The protein operates within lipid metabolism; malonyl-CoA biosynthesis; malonyl-CoA from acetyl-CoA: step 1/1. Its function is as follows. Component of the acetyl coenzyme A carboxylase (ACC) complex. Biotin carboxylase (BC) catalyzes the carboxylation of biotin on its carrier protein (BCCP) and then the CO(2) group is transferred by the transcarboxylase to acetyl-CoA to form malonyl-CoA. The chain is Acetyl-coenzyme A carboxylase carboxyl transferase subunit beta from Photobacterium profundum (strain SS9).